Here is a 676-residue protein sequence, read N- to C-terminus: MAVKVHTTKRGDPHELRNIFLQYASTEVDGEHYMTPEDFVQRYLGLYNDPNSNPKIVQLLAGVADQTKDGLISYQEFLAFESVLCAPDSMFIVAFQLFDKSGNGEVTFENVKEIFGQTIIHHHIPFNWDCEFIRLHFGHNRKKHLNYVEFTQFLQELQLEHARQAFALKDKSKSGMISGLDFSDVMVTIRSHMLTPFVEENLVSAAGGSTSHQVSFSYFNAFNSLLNNMELVRKIYSTLAGTRKDIEVTKEEFASAITYGVVTPINVGILYFINNVHISTGRLTLADIERIAPLAEGALPYNLAELQRQQSPGLGRPIWLQIAESAYRFTLGSVAGAVGATAVYPIDLVKTRMQNQRGTGSVVGELMYKNSFDCFKKVLRYEGFFGLYRGLIPQLIGVAPEKAIKLTVNDFVRDKFTRRDGSIPLPAEILAGGCAGGSQVIFTNPLEIVKIRLQVAGEITTGPRVSALNVLQDLGLFGLYKGAKACFLRDIPFSAIYFPVYAHCKLLLADENGHVGGINLLTAGAMAGVPAASLVTPADVIKTRLQVAARAGQTTYSGVIDCFRKILREEGPSAFWKGTAARVFRSSPQFGVTLVTYELLQRWFYIDFGGLKPSGSEPTPKSRIADLPPANPDHIGGYRLATATFAGIENKFGLYLPKFKSPGVAAAQPKVAAAAQ.

Position 2 is an N-acetylalanine (alanine 2). Positions 2-293 (AVKVHTTKRG…TLADIERIAP (292 aa)) are regulatory N-terminal domain. The Mitochondrial intermembrane segment spans residues 2–328 (AVKVHTTKRG…WLQIAESAYR (327 aa)). Aspartate 65, threonine 67, aspartate 69, leucine 71, and glutamate 76 together coordinate Ca(2+). EF-hand domains are found at residues 65-76 (DQTKDGLISYQE), 86-121 (APDSMFIVAFQLFDKSGNGEVTFENVKEIFGQTIIH), 125-155 (PFNWDCEFIRLHFGHNRKKHLNYVEFTQFLQ), and 157-192 (LQLEHARQAFALKDKSKSGMISGLDFSDVMVTIRSH). The linker loop domain stretch occupies residues 294–309 (LAEGALPYNLAELQRQ). Positions 319–611 (WLQIAESAYR…RWFYIDFGGL (293 aa)) are carrier domain. Solcar repeat units follow at residues 323-415 (AESA…VRDK), 423-507 (IPLP…CKLL), and 515-603 (VGGI…LQRW). Residues 329 to 346 (FTLGSVAGAVGATAVYPI) traverse the membrane as a helical segment. The Mitochondrial matrix segment spans residues 347-389 (DLVKTRMQNQRGTGSVVGELMYKNSFDCFKKVLRYEGFFGLYR). Residues 390–409 (GLIPQLIGVAPEKAIKLTVN) traverse the membrane as a helical segment. Residues 410-432 (DFVRDKFTRRDGSIPLPAEILAG) lie on the Mitochondrial intermembrane side of the membrane. Residues 433-446 (GCAGGSQVIFTNPL) form a helical membrane-spanning segment. The Mitochondrial matrix portion of the chain corresponds to 447 to 481 (EIVKIRLQVAGEITTGPRVSALNVLQDLGLFGLYK). Residues 482–501 (GAKACFLRDIPFSAIYFPVY) form a helical membrane-spanning segment. The Mitochondrial intermembrane portion of the chain corresponds to 502–520 (AHCKLLLADENGHVGGINL). Residues 521–538 (LTAGAMAGVPAASLVTPA) form a helical membrane-spanning segment. The Mitochondrial matrix segment spans residues 539–577 (DVIKTRLQVAARAGQTTYSGVIDCFRKILREEGPSAFWK). Residues 578 to 597 (GTAARVFRSSPQFGVTLVTY) form a helical membrane-spanning segment. Residues 598 to 676 (ELLQRWFYID…AQPKVAAAAQ (79 aa)) are Mitochondrial intermembrane-facing. Positions 612–674 (KPSGSEPTPK…AAAQPKVAAA (63 aa)) are C-terminal domain.

It belongs to the mitochondrial carrier (TC 2.A.29) family. As to quaternary structure, homodimer (via N-terminus).

Its subcellular location is the mitochondrion inner membrane. It carries out the reaction L-aspartate(in) + L-glutamate(out) + H(+)(out) = L-aspartate(out) + L-glutamate(in) + H(+)(in). The enzyme catalyses 3-sulfino-L-alanine(out) + L-glutamate(in) + H(+)(in) = 3-sulfino-L-alanine(in) + L-glutamate(out) + H(+)(out). The catalysed reaction is 3-sulfino-L-alanine(out) + L-aspartate(in) = 3-sulfino-L-alanine(in) + L-aspartate(out). L-aspartate and 3-sulfino-L-alanine uptake are both inhibited by glisoxepide. In terms of biological role, mitochondrial electrogenic aspartate/glutamate antiporter that favors efflux of aspartate and entry of glutamate and proton within the mitochondria as part of the malate-aspartate shuttle. Also mediates the uptake of L-cysteinesulfinate (3-sulfino-L-alanine) by mitochondria in exchange of L-glutamate and proton. Can also exchange L-cysteinesulfinate with aspartate in their anionic form without any proton translocation. Lacks transport activity towards L-glutamine or gamma-aminobutyric acid (GABA). The chain is Electrogenic aspartate/glutamate antiporter SLC25A12, mitochondrial from Rattus norvegicus (Rat).